Consider the following 355-residue polypeptide: Zinc finger protein CONSTANS-LIKE 1 (355 aa).

Cys-12, Cys-15, Cys-35, His-40, Cys-55, Cys-58, Cys-78, and His-83 together coordinate Zn(2+). The B box-type 1; atypical zinc finger occupies Cys-12–Val-54. The B box-type 2; atypical zinc-finger motif lies at Cys-55 to Ile-97. The span at Glu-252–Arg-264 shows a compositional bias: polar residues. Residues Glu-252–Leu-281 are disordered. A CCT domain is found at Arg-286 to Lys-328.

It belongs to the CONSTANS family. In terms of tissue distribution, highly expressed in leaves and at lower levels in stems, flowers and siliques. Not detected in roots.

It is found in the nucleus. In terms of biological role, putative transcription factor that may be involved in the light input to the circadian clock but does not affect flowering time. The polypeptide is Zinc finger protein CONSTANS-LIKE 1 (COL1) (Arabidopsis thaliana (Mouse-ear cress)).